We begin with the raw amino-acid sequence, 236 residues long: Purine nucleoside phosphorylase DeoD-type 2 (236 aa).

H5 is a binding site for a purine D-ribonucleoside. Residues G21, R25, R44, and 88–91 (RVGS) each bind phosphate. Residues 180 to 182 (DME) and 204 to 205 (SD) contribute to the a purine D-ribonucleoside site. Residue D205 is the Proton donor of the active site.

The protein belongs to the PNP/UDP phosphorylase family. As to quaternary structure, homohexamer; trimer of homodimers.

The catalysed reaction is a purine D-ribonucleoside + phosphate = a purine nucleobase + alpha-D-ribose 1-phosphate. It catalyses the reaction a purine 2'-deoxy-D-ribonucleoside + phosphate = a purine nucleobase + 2-deoxy-alpha-D-ribose 1-phosphate. Its function is as follows. Catalyzes the reversible phosphorolytic breakdown of the N-glycosidic bond in the beta-(deoxy)ribonucleoside molecules, with the formation of the corresponding free purine bases and pentose-1-phosphate. The polypeptide is Purine nucleoside phosphorylase DeoD-type 2 (Photobacterium profundum (strain SS9)).